The following is a 250-amino-acid chain: Leucyl/phenylalanyl-tRNA--protein transferase (250 aa).

Belongs to the L/F-transferase family.

The protein resides in the cytoplasm. The enzyme catalyses N-terminal L-lysyl-[protein] + L-leucyl-tRNA(Leu) = N-terminal L-leucyl-L-lysyl-[protein] + tRNA(Leu) + H(+). The catalysed reaction is N-terminal L-arginyl-[protein] + L-leucyl-tRNA(Leu) = N-terminal L-leucyl-L-arginyl-[protein] + tRNA(Leu) + H(+). It catalyses the reaction L-phenylalanyl-tRNA(Phe) + an N-terminal L-alpha-aminoacyl-[protein] = an N-terminal L-phenylalanyl-L-alpha-aminoacyl-[protein] + tRNA(Phe). Functionally, functions in the N-end rule pathway of protein degradation where it conjugates Leu, Phe and, less efficiently, Met from aminoacyl-tRNAs to the N-termini of proteins containing an N-terminal arginine or lysine. The sequence is that of Leucyl/phenylalanyl-tRNA--protein transferase from Cupriavidus pinatubonensis (strain JMP 134 / LMG 1197) (Cupriavidus necator (strain JMP 134)).